The primary structure comprises 537 residues: MGCVQCKDKEATKLTEERDGSLNQSSGYRYGTDPTPQHYPSFGVTSIPNYNNFHAAGGQGLTVFGGVNSSSHTGTLRTRGGTGVTLFVALYDYEARTEDDLSFHKGEKFQILNSSEGDWWEARSLTTGETGYIPSNYVAPVDSIQAEEWYFGKLGRKDAERQLLSFGNPRGTFLIRESETTKGAYSLSIRDWDDMKGDHVKHYKIRKLDNGGYYITTRAQFETLQQLVQHYSERAAGLCCRLVVPCHKGMPRLTDLSVKTKDVWEIPRESLQLIKRLGNGQFGEVWMGTWNGNTKVAIKTLKPGTMSPESFLEEAQIMKKLKHDKLVQLYAVVSEEPIYIVTEYMNKGSLLDFLKDGEGRALKLPNLVDMAAQVAAGMAYIERMNYIHRDLRSANILVGNGLICKIADFGLARLIEDNEYTARQGAKFPIKWTAPEAALYGRFTIKSDVWSFGILLTELVTKGRVPYPGMNNREVLEQVERGYRMPCPQDCPISLHELMIHCWKKDPEERPTFEYLQSFLEDYFTATEPQYQPGENL.

Gly2 is lipidated: N-myristoyl glycine. Residues Cys3 and Cys6 are each lipidated (S-palmitoyl cysteine). Phosphothreonine; by PKC is present on Thr12. Residues 14 to 35 form a disordered region; it reads LTEERDGSLNQSSGYRYGTDPT. Phosphoserine occurs at positions 21 and 26. In terms of domain architecture, SH3 spans 82-143; it reads TGVTLFVALY…PSNYVAPVDS (62 aa). In terms of domain architecture, SH2 spans 149 to 246; it reads WYFGKLGRKD…GLCCRLVVPC (98 aa). Tyr185 carries the phosphotyrosine modification. Residues 271–524 enclose the Protein kinase domain; the sequence is LQLIKRLGNG…YLQSFLEDYF (254 aa). Residues 277–285 and Lys299 contribute to the ATP site; that span reads LGNGQFGEV. Asp390 acts as the Proton acceptor in catalysis. Tyr420 is modified (phosphotyrosine; by autocatalysis). Residue Tyr531 is modified to Phosphotyrosine; by CSK.

Belongs to the protein kinase superfamily. Tyr protein kinase family. SRC subfamily. Interacts (via its SH3 domain) with PIK3R1 and PRMT8. Interacts with FYB1, PAG1, and SH2D1A. Interacts with CD79A (tyrosine-phosphorylated form); the interaction increases FYN activity. Interacts (via SH2 domain) with CSF1R (tyrosine phosphorylated). Interacts with TOM1L1 (phosphorylated form). Interacts with KDR (tyrosine phosphorylated). Interacts (via SH3 domain) with KLHL2 (via N-terminus). Interacts with SH2D1A and SLAMF1. Interacts with ITCH; the interaction phosphorylates ITCH and negatively regulates its activity. Interacts with FASLG. Interacts with RUNX3. Interacts with KIT. Interacts with EPHA8; possible downstream effector of EPHA8 in regulation of cell adhesion. Interacts with PTK2/FAK1; this interaction leads to PTK2/FAK1 phosphorylation and activation. Interacts with CAV1; this interaction couples integrins to the Ras-ERK pathway. Interacts with UNC119. Interacts (via SH2 domain) with PTPRH (phosphorylated form). Interacts with PTPRO (phosphorylated form). Interacts with PTPRB (phosphorylated form). Interacts with FYB2. Interacts with DSCAM. Interacts with SKAP1 and FYB1; this interaction promotes the phosphorylation of CLNK. Interacts with NEDD9; in the presence of PTK2. As to quaternary structure, (Microbial infection) Interacts (via its SH3 domain) with hepatitis E virus/HEV protein ORF3. Mn(2+) is required as a cofactor. In terms of processing, autophosphorylated at Tyr-420. Phosphorylation on the C-terminal tail at Tyr-531 by CSK maintains the enzyme in an inactive state. PTPRC/CD45 dephosphorylates Tyr-531 leading to activation. Ultraviolet B (UVB) strongly increase phosphorylation at Thr-12 and kinase activity, and promotes translocation from the cytoplasm to the nucleus. Dephosphorylation at Tyr-420 by PTPN2 negatively regulates T-cell receptor signaling. Phosphorylated at tyrosine residues, which can be enhanced by NTN1. Post-translationally, palmitoylated. Palmitoylation at Cys-3 and Cys-6, probably by ZDHHC21, regulates subcellular location. As to expression, isoform 1 is highly expressed in the brain. Isoform 2 is expressed in cells of hemopoietic lineages, especially T-lymphocytes.

It is found in the cytoplasm. Its subcellular location is the nucleus. The protein localises to the cell membrane. The protein resides in the perikaryon. It catalyses the reaction L-tyrosyl-[protein] + ATP = O-phospho-L-tyrosyl-[protein] + ADP + H(+). Its activity is regulated as follows. Inhibited by phosphorylation of Tyr-531 by leukocyte common antigen and activated by dephosphorylation of this site. Its function is as follows. Non-receptor tyrosine-protein kinase that plays a role in many biological processes including regulation of cell growth and survival, cell adhesion, integrin-mediated signaling, cytoskeletal remodeling, cell motility, immune response and axon guidance. Inactive FYN is phosphorylated on its C-terminal tail within the catalytic domain. Following activation by PKA, the protein subsequently associates with PTK2/FAK1, allowing PTK2/FAK1 phosphorylation, activation and targeting to focal adhesions. Involved in the regulation of cell adhesion and motility through phosphorylation of CTNNB1 (beta-catenin) and CTNND1 (delta-catenin). Regulates cytoskeletal remodeling by phosphorylating several proteins including the actin regulator WAS and the microtubule-associated proteins MAP2 and MAPT. Promotes cell survival by phosphorylating AGAP2/PIKE-A and preventing its apoptotic cleavage. Participates in signal transduction pathways that regulate the integrity of the glomerular slit diaphragm (an essential part of the glomerular filter of the kidney) by phosphorylating several slit diaphragm components including NPHS1, KIRREL1 and TRPC6. Plays a role in neural processes by phosphorylating DPYSL2, a multifunctional adapter protein within the central nervous system, ARHGAP32, a regulator for Rho family GTPases implicated in various neural functions, and SNCA, a small pre-synaptic protein. Involved in reelin signaling by mediating phosphorylation of DAB1 following reelin (RELN)-binding to its receptor. Participates in the downstream signaling pathways that lead to T-cell differentiation and proliferation following T-cell receptor (TCR) stimulation. Phosphorylates PTK2B/PYK2 in response to T-cell receptor activation. Also participates in negative feedback regulation of TCR signaling through phosphorylation of PAG1, thereby promoting interaction between PAG1 and CSK and recruitment of CSK to lipid rafts. CSK maintains LCK and FYN in an inactive form. Promotes CD28-induced phosphorylation of VAV1. In mast cells, phosphorylates CLNK after activation of immunoglobulin epsilon receptor signaling. Can also promote CD244-mediated NK cell activation. In Homo sapiens (Human), this protein is Tyrosine-protein kinase Fyn (FYN).